The chain runs to 124 residues: Small ribosomal subunit protein uS12c (124 aa).

Belongs to the universal ribosomal protein uS12 family. Part of the 30S ribosomal subunit.

It is found in the plastid. In terms of biological role, with S4 and S5 plays an important role in translational accuracy. Located at the interface of the 30S and 50S subunits. The chain is Small ribosomal subunit protein uS12c (rps12) from Helicosporidium sp. subsp. Simulium jonesii (Green alga).